Here is a 194-residue protein sequence, read N- to C-terminus: Lachesicidin (194 aa).

The N-terminal stretch at Met-1–Ala-22 is a signal peptide. The propeptide occupies His-23 to Val-160. 2 disulfides stabilise this stretch: Cys-79–Cys-90 and Cys-101–Cys-118. Over residues Glu-125–Lys-154 the composition is skewed to acidic residues. The disordered stretch occupies residues Glu-125–Pro-157.

It belongs to the cathelicidin family. Expressed by the venom gland.

It is found in the secreted. The protein localises to the target cell membrane. Functionally, potent antimicrobial peptide against Gram-negative and Gram-positive bacteria. Adopts an amphipathic alpha helical conformation, that may allow to partition into the target membrane. Low hemolytic activities have been observed on mammalian cells. The chain is Lachesicidin from Lachesis muta rhombeata (Bushmaster).